Consider the following 254-residue polypeptide: Ribosomal RNA small subunit methyltransferase J (254 aa).

S-adenosyl-L-methionine is bound by residues 107–108 (RD), 123–124 (ER), and Asp177.

The protein belongs to the methyltransferase superfamily. RsmJ family.

The protein localises to the cytoplasm. It carries out the reaction guanosine(1516) in 16S rRNA + S-adenosyl-L-methionine = N(2)-methylguanosine(1516) in 16S rRNA + S-adenosyl-L-homocysteine + H(+). In terms of biological role, specifically methylates the guanosine in position 1516 of 16S rRNA. In Histophilus somni (strain 129Pt) (Haemophilus somnus), this protein is Ribosomal RNA small subunit methyltransferase J.